Reading from the N-terminus, the 330-residue chain is Class III chitinase ARB_03514 (330 aa).

An N-terminal signal peptide occupies residues 1–22 (MSSVKNILSFVALFAGVKTAYA). One can recognise a GH18 domain in the interval 23-314 (GLNSPGHNNV…SAVKGALSAG (292 aa)). 2 N-linked (GlcNAc...) asparagine glycosylation sites follow: asparagine 61 and asparagine 135. The active-site Proton donor is glutamate 155. N-linked (GlcNAc...) asparagine glycans are attached at residues asparagine 278 and asparagine 302.

Belongs to the glycosyl hydrolase 18 family. Chitinase class III subfamily. As to quaternary structure, monomer.

The protein localises to the secreted. The enzyme catalyses Random endo-hydrolysis of N-acetyl-beta-D-glucosaminide (1-&gt;4)-beta-linkages in chitin and chitodextrins.. In terms of biological role, secreted chitinase involved in the degradation of chitin, a component of the cell walls of fungi and exoskeletal elements of some animals (including worms and arthropods). Plays a morphogenetic role during apical growth, cell division and differentiation (cell wall morphogenesis). The polypeptide is Class III chitinase ARB_03514 (Arthroderma benhamiae (strain ATCC MYA-4681 / CBS 112371) (Trichophyton mentagrophytes)).